A 308-amino-acid polypeptide reads, in one-letter code: Cyclin-D4-1 (308 aa).

This sequence belongs to the cyclin family. Cyclin D subfamily. Interacts with CDKA-1, CDKB2-1, KRP4/ICK7, KRP5/ICK3, KRP6/ICK4 and KRP7/ICK5. As to expression, expressed in shoot apical meristem, leaf primordia vascular tissues and tapetum of anthers.

Its function is as follows. May activate cell cycle in the root apical meristem (RAM) and promote embryonic root (radicle) protrusion. This Arabidopsis thaliana (Mouse-ear cress) protein is Cyclin-D4-1 (CYCD4-1).